Reading from the N-terminus, the 702-residue chain is Ribosomal RNA large subunit methyltransferase K/L (702 aa).

One can recognise a THUMP domain in the interval 43–154 (LVYQSLMWSR…KETASIALDL (112 aa)).

The protein belongs to the methyltransferase superfamily. RlmKL family.

The protein localises to the cytoplasm. It catalyses the reaction guanosine(2445) in 23S rRNA + S-adenosyl-L-methionine = N(2)-methylguanosine(2445) in 23S rRNA + S-adenosyl-L-homocysteine + H(+). The enzyme catalyses guanosine(2069) in 23S rRNA + S-adenosyl-L-methionine = N(2)-methylguanosine(2069) in 23S rRNA + S-adenosyl-L-homocysteine + H(+). Specifically methylates the guanine in position 2445 (m2G2445) and the guanine in position 2069 (m7G2069) of 23S rRNA. The protein is Ribosomal RNA large subunit methyltransferase K/L of Shigella boydii serotype 4 (strain Sb227).